The chain runs to 165 residues: Protein SprT (165 aa).

Positions 22–163 (LAQANLKLDR…RCVHCGEPLV (142 aa)) constitute a SprT-like domain. Position 78 (histidine 78) interacts with Zn(2+). Residue glutamate 79 is part of the active site. A Zn(2+)-binding site is contributed by histidine 82.

Belongs to the SprT family. It depends on Zn(2+) as a cofactor.

It is found in the cytoplasm. The polypeptide is Protein SprT (Salmonella paratyphi C (strain RKS4594)).